Reading from the N-terminus, the 197-residue chain is ADP-ribosylation factor-like protein 6-interacting protein 1 (197 aa).

4 helical membrane passes run 43 to 63, 64 to 84, 129 to 149, and 150 to 170; these read VVFG…LSLI, TLLS…PMVS, TVFV…GAII, and NNLL…GLQN.

This sequence belongs to the ARL6ip family.

The protein localises to the membrane. The polypeptide is ADP-ribosylation factor-like protein 6-interacting protein 1 (Drosophila melanogaster (Fruit fly)).